We begin with the raw amino-acid sequence, 376 residues long: Cellular tumor antigen p53 (376 aa).

A transcription activation (acidic) region spans residues 1–36 (MEGNGERDTMMVEPPDSQEFAELWLRNLIVRDNSLW). The DNA-binding element occupies 77-268 (DYPGLLNFTL…KTEESNFKKQ (192 aa)). Positions 150-159 (RCPHHERSND) are enriched in basic and acidic residues. Residues 150 to 171 (RCPHHERSNDSSDGPAPPGHLL) form a disordered region. Zn(2+)-binding residues include Cys151, His154, Cys214, and Cys218. Residues 249-256 (RVCACPGR) are interaction with DNA. Composition is skewed to basic and acidic residues over residues 257–270 (DRKT…KQQE) and 282–294 (SMKD…EASK). The interval 257–306 (DRKTEESNFKKQQEPKTSGKTLTKRSMKDPPSHPEASKKSKNSSSDDEIY) is disordered. The Bipartite nuclear localization signal signature appears at 280-297 (KRSMKDPPSHPEASKKSK). The interval 303–334 (DEIYTLQVRGKERYEFLKKINDGLELSDVVPP) is oligomerization. The Nuclear export signal motif lies at 317–328 (EFLKKINDGLEL). Residues 342 to 376 (QKLLSKTCRKERDGAAGEPKRGKKRLVKEEKCDSD) are disordered. Residues 347 to 372 (KTCRKERDGAAGEPKRGKKRLVKEEK) are basic (repression of DNA-binding). The segment covering 349–361 (CRKERDGAAGEPK) has biased composition (basic and acidic residues).

The protein belongs to the p53 family. As to quaternary structure, binds DNA as a homotetramer. Requires Zn(2+) as cofactor.

Its subcellular location is the cytoplasm. It is found in the nucleus. Its function is as follows. Multifunctional transcription factor that induces cell cycle arrest, DNA repair or apoptosis upon binding to its target DNA sequence. Acts as a tumor suppressor in many tumor types; induces growth arrest or apoptosis depending on the physiological circumstances and cell type. Negatively regulates cell division by controlling expression of a set of genes required for this process. One of the activated genes is an inhibitor of cyclin-dependent kinases. Apoptosis induction seems to be mediated either by stimulation of BAX and FAS antigen expression, or by repression of Bcl-2 expression. In Ictalurus punctatus (Channel catfish), this protein is Cellular tumor antigen p53 (tp53).